The sequence spans 315 residues: THO complex subunit 3 (315 aa).

6 WD repeats span residues 18 to 57, 64 to 104, 106 to 145, 189 to 228, 231 to 270, and 272 to 311; these read GHKKKVHSVAWNSNGTKLASGSVDQTARIWNIEPHGHSKA, GHTD…CTQQ, ELSGENINITYKPDGTHVAVGNRDDELTILDVRKFKPLHR, AHTAGCYCIAIDPKGRYFAVGSADSLVSLWDISDMLCLRT, KLEWPVRTISFNYSGEYIASASEDLFIDIANVQTGRTVHQ, and PCRAAMNSVEWNPKYNLLAYAGDDKNPKYNTDEGVFRIFG.

The protein belongs to the THOC3 family. As to quaternary structure, component of the THO complex, which is composed of THO1, THO2, THO3, THO5, THO6 and THO7.

The protein resides in the nucleus. Functionally, acts as a component of the THO subcomplex of the TREX complex which is thought to couple mRNA transcription, processing and nuclear export. Contributes to the integrity of the endogenous trans-acting small interfering RNA (ta-siRNA) pathway. May process or transport a long RNA molecule so that it can be a template for secondary siRNA production. May participate in the trafficking of siRNA precursors to the ARGONAUTE catalytic center. Required for the generation of functional messenger ribonucleoproteins (mRNPs). This chain is THO complex subunit 3 (THO3), found in Arabidopsis thaliana (Mouse-ear cress).